Consider the following 119-residue polypeptide: Large ribosomal subunit protein uL18 (119 aa).

The protein belongs to the universal ribosomal protein uL18 family. As to quaternary structure, part of the 50S ribosomal subunit; part of the 5S rRNA/L5/L18/L25 subcomplex. Contacts the 5S and 23S rRNAs.

Its function is as follows. This is one of the proteins that bind and probably mediate the attachment of the 5S RNA into the large ribosomal subunit, where it forms part of the central protuberance. In Dinoroseobacter shibae (strain DSM 16493 / NCIMB 14021 / DFL 12), this protein is Large ribosomal subunit protein uL18.